A 223-amino-acid polypeptide reads, in one-letter code: uncharacterized protein (223 aa).

The 192-residue stretch at 29–220 (KQTYKMFKED…AKEILKNIGD (192 aa)) folds into the Tyr recombinase domain. Catalysis depends on residues Arg71, Lys103, His170, Arg173, and His196. Tyr205 (O-(3'-phospho-DNA)-tyrosine intermediate) is an active-site residue.

It belongs to the 'phage' integrase family.

This is an uncharacterized protein from Methanocaldococcus jannaschii (strain ATCC 43067 / DSM 2661 / JAL-1 / JCM 10045 / NBRC 100440) (Methanococcus jannaschii).